Reading from the N-terminus, the 591-residue chain is Acetyltransferase spyB (591 aa).

An N-linked (GlcNAc...) asparagine glycan is attached at N114. The next 9 helical transmembrane spans lie at 123–143 (GTIIWTLKYVPLAASRCLIFL), 168–188 (TLLYALPFLLAQNLVPAILIL), 199–219 (LWIFWSVFVFYQWLQIPISHG), 228–248 (VGVQLFIVILQGFNLVLINPL), 309–329 (SAFLVRQAAIVAWLYLYLNCA), 383–403 (ASILSVGVGLDAPEDWPPLFG), 453–473 (IFFVFLVSGVMHVMSDLLMGI), 481–501 (ILFFCSMAVGVMIEDAVQAAW), and 529–549 (LVGFIWVCVWLSLTTPAWLCP).

This sequence belongs to the wax synthase family.

It localises to the membrane. The catalysed reaction is sartorypyrone F + acetyl-CoA = sartorypyrone G + CoA. It catalyses the reaction sartorypyrone D + acetyl-CoA = sartorypyrone A + CoA. Its pathway is secondary metabolite biosynthesis; terpenoid biosynthesis. Acetyltransferase; part of the gene cluster that mediates the biosynthesis of meroterpenoids called sartorypyrones. SpyB catalyzes the last step of the pathway and is responsible for the acetylation of sartorypyrones D and F to produce sartorypyrones A and G, respectively. The biosynthesis of sartorypyrones begins with the production of triacetic acid lactone (TAL) by the NR-PKS spyA using one molecule of acetyl-CoA and two molecules of malonyl-CoA. The prenyltransferase spyF then conjugates geranylgeranyl pyrophosphate (GGPP) to TAL to form geranylgeranyl-triacetate lactone, for which the pathway-specific geranylgeranyl pyrophosphate synthase (GGPS) spyE is required to provide GGPP. Subsequently, geranylgeranyl-triacetate lactone is epoxidized at the terminal olein by the FAD-dependent monooxygenase spyC, followed by cyclization of the terpenoid component catalyzed by the terpene cyclase spyD to produce both the bicyclic sartorypyrone F and the monocyclic sartorypyrone D. Finally, the last step of the biosynthesis involves the acetylation of the meroterpenoids sartorypyrones D and F by the acetyltransferase SpyB to produce sartorypyrones A and G, respectively. This Aspergillus fumigatus (strain ATCC MYA-4609 / CBS 101355 / FGSC A1100 / Af293) (Neosartorya fumigata) protein is Acetyltransferase spyB.